A 179-amino-acid chain; its full sequence is Large ribosomal subunit protein uL5 (179 aa).

This sequence belongs to the universal ribosomal protein uL5 family. Part of the 50S ribosomal subunit; part of the 5S rRNA/L5/L18/L25 subcomplex. Contacts the 5S rRNA and the P site tRNA. Forms a bridge to the 30S subunit in the 70S ribosome.

This is one of the proteins that bind and probably mediate the attachment of the 5S RNA into the large ribosomal subunit, where it forms part of the central protuberance. In the 70S ribosome it contacts protein S13 of the 30S subunit (bridge B1b), connecting the 2 subunits; this bridge is implicated in subunit movement. Contacts the P site tRNA; the 5S rRNA and some of its associated proteins might help stabilize positioning of ribosome-bound tRNAs. This chain is Large ribosomal subunit protein uL5, found in Herminiimonas arsenicoxydans.